Here is a 153-residue protein sequence, read N- to C-terminus: UPF0756 membrane protein Pjdr2_2290 (153 aa).

The next 5 helical transmembrane spans lie at L6–A26, L50–V70, L75–A95, M111–V131, and G132–G152.

The protein belongs to the UPF0756 family.

The protein resides in the cell membrane. This Paenibacillus sp. (strain JDR-2) protein is UPF0756 membrane protein Pjdr2_2290.